The sequence spans 152 residues: UPF0756 membrane protein Moth_1009 (152 aa).

The next 4 membrane-spanning stretches (helical) occupy residues 5 to 25 (LIILAVLVVAVLGRANTVALA), 41 to 61 (IFPFIEKGGTFWGLVLLIAAI), 75 to 95 (LGHVFLSWVGLSAFILSLITT), and 117 to 137 (LILGAVIAAAFLGGVPVGPFI).

This sequence belongs to the UPF0756 family.

The protein localises to the cell membrane. In Moorella thermoacetica (strain ATCC 39073 / JCM 9320), this protein is UPF0756 membrane protein Moth_1009.